Reading from the N-terminus, the 233-residue chain is Pyridoxine 5'-phosphate synthase (233 aa).

Residue Asn6 coordinates 3-amino-2-oxopropyl phosphate. Position 8–9 (8–9 (DH)) interacts with 1-deoxy-D-xylulose 5-phosphate. 3-amino-2-oxopropyl phosphate is bound at residue Arg17. His42 (proton acceptor) is an active-site residue. Positions 44 and 49 each coordinate 1-deoxy-D-xylulose 5-phosphate. Glu69 serves as the catalytic Proton acceptor. Thr99 is a 1-deoxy-D-xylulose 5-phosphate binding site. His186 (proton donor) is an active-site residue. 3-amino-2-oxopropyl phosphate is bound by residues Gly187 and 208–209 (GH).

This sequence belongs to the PNP synthase family. In terms of assembly, homooctamer; tetramer of dimers.

The protein localises to the cytoplasm. The catalysed reaction is 3-amino-2-oxopropyl phosphate + 1-deoxy-D-xylulose 5-phosphate = pyridoxine 5'-phosphate + phosphate + 2 H2O + H(+). The protein operates within cofactor biosynthesis; pyridoxine 5'-phosphate biosynthesis; pyridoxine 5'-phosphate from D-erythrose 4-phosphate: step 5/5. In terms of biological role, catalyzes the complicated ring closure reaction between the two acyclic compounds 1-deoxy-D-xylulose-5-phosphate (DXP) and 3-amino-2-oxopropyl phosphate (1-amino-acetone-3-phosphate or AAP) to form pyridoxine 5'-phosphate (PNP) and inorganic phosphate. The chain is Pyridoxine 5'-phosphate synthase from Anaplasma phagocytophilum (strain HZ).